The sequence spans 140 residues: Ribosome-binding factor A (140 aa).

The protein belongs to the RbfA family. As to quaternary structure, monomer. Binds 30S ribosomal subunits, but not 50S ribosomal subunits or 70S ribosomes.

The protein localises to the cytoplasm. Functionally, one of several proteins that assist in the late maturation steps of the functional core of the 30S ribosomal subunit. Associates with free 30S ribosomal subunits (but not with 30S subunits that are part of 70S ribosomes or polysomes). Required for efficient processing of 16S rRNA. May interact with the 5'-terminal helix region of 16S rRNA. This Cereibacter sphaeroides (strain ATCC 17023 / DSM 158 / JCM 6121 / CCUG 31486 / LMG 2827 / NBRC 12203 / NCIMB 8253 / ATH 2.4.1.) (Rhodobacter sphaeroides) protein is Ribosome-binding factor A.